A 648-amino-acid polypeptide reads, in one-letter code: Transcriptional regulator ManR (648 aa).

PRD domains lie at 187-292 and 297-404; these read KFLH…YPLQ and LENA…MQGS. Phosphohistidine; by HPr occurs at positions 222, 281, 334, and 393. The PTS EIIB type-2 domain occupies 409–500; it reads KKAVIVCHMG…FIRQLGESHR (92 aa). Cys-415 carries the post-translational modification Phosphocysteine; by EIIA. Positions 510-648 constitute a PTS EIIA type-2 domain; it reads NNTTPFLVFL…VMTFLSHLDY (139 aa). The residue at position 570 (His-570) is a Phosphohistidine; by EIIB.

Belongs to the transcriptional antiterminator BglG family.

It catalyses the reaction D-mannose(out) + N(pros)-phospho-L-histidyl-[protein] = D-mannose 6-phosphate(in) + L-histidyl-[protein]. The regulatory activity of ManR is modulated by phosphorylation and dephosphorylation of the various ManR domains. It becomes activated via phosphoryl group transfer from PEP, EI and HPr on the two conserved histidine residues in the PRD 2 domain, whereas phosphorylation of the EIIA-like domain on His-570 by the PTS EIIB-Man domain of ManP inactivates ManR. Functionally, positively regulates the expression of the mannose operon that consists of three genes, manP, manA, and yjdF, which are responsible for the transport and utilization of mannose. Also activates its own expression. This Bacillus subtilis (strain 168) protein is Transcriptional regulator ManR (manR).